A 316-amino-acid polypeptide reads, in one-letter code: Phosphate acyltransferase (316 aa).

Belongs to the PlsX family. In terms of assembly, homodimer. Probably interacts with PlsY.

Its subcellular location is the cytoplasm. It carries out the reaction a fatty acyl-[ACP] + phosphate = an acyl phosphate + holo-[ACP]. It participates in lipid metabolism; phospholipid metabolism. Catalyzes the reversible formation of acyl-phosphate (acyl-PO(4)) from acyl-[acyl-carrier-protein] (acyl-ACP). This enzyme utilizes acyl-ACP as fatty acyl donor, but not acyl-CoA. This is Phosphate acyltransferase from Chlamydia felis (strain Fe/C-56) (Chlamydophila felis).